Consider the following 129-residue polypeptide: Protein Turandot B1 (129 aa).

The signal sequence occupies residues 1-21; it reads MNSATSLMCFALLLISPLCMG.

The protein belongs to the Turandot family.

It localises to the secreted. In terms of biological role, a humoral factor that may play a role in stress tolerance. The sequence is that of Protein Turandot B1 (TotB1) from Drosophila erecta (Fruit fly).